A 590-amino-acid chain; its full sequence is MAAPYPGSGGGSEVKCVGGRGASVPWDFLPGLMVKAPSGPCLQAQRKEKSRNAARSRRGKENLEFFELAKLLPLPGAISSQLDKASIVRLSVTYLRLRRFAALGAPPWGLRAAGPPAGLAPGRRGPAALVSEVFEQHLGGHILQSLDGFVFALNQEGKFLYISETVSIYLGLSQVEMTGSSVFDYIHPGDHSEVLEQLGLRTPTPGPPTPPSVSSSSSSSSSLADTPEIEASLTKVPPSSLVQERSFFVRMKSTLTKRGLHVKASGYKVIHVTGRLRAHALGLVALGHTLPPAPLAELPLHGHMIVFRLSLGLTILACESRVSDHMDLGPSELVGRSCYQFVHGQDATRIRQSHVDLLDKGQVMTGYYRWLQRAGGFVWLQSVATVAGSGKSPGEHHVLWVSHVLSQAEGGQTPLDAFQLPASVACEEASSPGPEPTEPEPPTEGKQAAPAENEAPQTQGKRIKVEPGPRETKGSEDSGDEDPSSHPATPRPEFTSVIRAGVLKQDPVRPWGLAPPGDPPPTLLHAGFLPPVVRGLCTPGTIRYGPAELGLVYPHLQRLGPGPALPEAFYPPLGLPYPGPAGTRLPRKGD.

Residues 45–98 (QRKEKSRNAARSRRGKENLEFFELAKLLPLPGAISSQLDKASIVRLSVTYLRLR) form the bHLH domain. Positions 135-207 (EQHLGGHILQ…LGLRTPTPGP (73 aa)) constitute a PAS 1 domain. The disordered stretch occupies residues 198 to 229 (LGLRTPTPGPPTPPSVSSSSSSSSSLADTPEI). The segment covering 212–222 (SVSSSSSSSSS) has biased composition (low complexity). Residues 293-359 (APLAELPLHG…IRQSHVDLLD (67 aa)) enclose the PAS 2 domain. One can recognise a PAC domain in the interval 365–408 (TGYYRWLQRAGGFVWLQSVATVAGSGKSPGEHHVLWVSHVLSQA). Residues 425-494 (ACEEASSPGP…SHPATPRPEF (70 aa)) are disordered. Residues 433 to 442 (GPEPTEPEPP) are compositionally biased toward pro residues. Positions 463 to 476 (IKVEPGPRETKGSE) are enriched in basic and acidic residues.

As to quaternary structure, efficient DNA binding requires dimerization with another bHLH protein. Interacts with ARNT; forms a heterodimer that binds core DNA sequence 5'-[AG]CGTG-3' within the hypoxia response element (HRE) leading to a transcriptional repressor on its target gene TH.

Its subcellular location is the nucleus. Its function is as follows. May control regulatory pathways relevant to schizophrenia and to psychotic illness. May play a role in late central nervous system development by modulating EPO expression in response to cellular oxygen level. Forms a heterodimer that binds core DNA sequence 5'-TACGTG-3' within the hypoxia response element (HRE) leading to transcriptional repression on its target gene TH. The protein is Neuronal PAS domain-containing protein 1 (NPAS1) of Homo sapiens (Human).